Consider the following 438-residue polypeptide: 23S rRNA (uracil(1939)-C(5))-methyltransferase RlmD (438 aa).

Residues Lys13–Ala71 enclose the TRAM domain. Positions 84, 90, 93, and 167 each coordinate [4Fe-4S] cluster. S-adenosyl-L-methionine contacts are provided by Gln271, Phe300, Asn305, Glu321, Asp348, and Asp368. The active-site Nucleophile is the Cys394.

Belongs to the class I-like SAM-binding methyltransferase superfamily. RNA M5U methyltransferase family. RlmD subfamily.

The catalysed reaction is uridine(1939) in 23S rRNA + S-adenosyl-L-methionine = 5-methyluridine(1939) in 23S rRNA + S-adenosyl-L-homocysteine + H(+). Its function is as follows. Catalyzes the formation of 5-methyl-uridine at position 1939 (m5U1939) in 23S rRNA. This Marinomonas posidonica (strain CECT 7376 / NCIMB 14433 / IVIA-Po-181) protein is 23S rRNA (uracil(1939)-C(5))-methyltransferase RlmD.